We begin with the raw amino-acid sequence, 227 residues long: Cytochrome c oxidase subunit 2 (227 aa).

At methionine 1–serine 14 the chain is on the mitochondrial intermembrane side. A helical membrane pass occupies residues proline 15 to methionine 45. The Mitochondrial matrix portion of the chain corresponds to leucine 46 to glutamine 59. Residues glutamate 60–methionine 87 traverse the membrane as a helical segment. Residues aspartate 88 to leucine 227 lie on the Mitochondrial intermembrane side of the membrane. Cu cation is bound by residues histidine 161, cysteine 196, glutamate 198, cysteine 200, histidine 204, and methionine 207. Position 198 (glutamate 198) interacts with Mg(2+). Phosphotyrosine is present on tyrosine 218.

This sequence belongs to the cytochrome c oxidase subunit 2 family. In terms of assembly, component of the cytochrome c oxidase (complex IV, CIV), a multisubunit enzyme composed of 14 subunits. The complex is composed of a catalytic core of 3 subunits MT-CO1, MT-CO2 and MT-CO3, encoded in the mitochondrial DNA, and 11 supernumerary subunits COX4I, COX5A, COX5B, COX6A, COX6B, COX6C, COX7A, COX7B, COX7C, COX8 and NDUFA4, which are encoded in the nuclear genome. The complex exists as a monomer or a dimer and forms supercomplexes (SCs) in the inner mitochondrial membrane with NADH-ubiquinone oxidoreductase (complex I, CI) and ubiquinol-cytochrome c oxidoreductase (cytochrome b-c1 complex, complex III, CIII), resulting in different assemblies (supercomplex SCI(1)III(2)IV(1) and megacomplex MCI(2)III(2)IV(2)). Found in a complex with TMEM177, COA6, COX18, COX20, SCO1 and SCO2. Interacts with TMEM177 in a COX20-dependent manner. Interacts with COX20. Interacts with COX16. The cofactor is Cu cation.

The protein resides in the mitochondrion inner membrane. It carries out the reaction 4 Fe(II)-[cytochrome c] + O2 + 8 H(+)(in) = 4 Fe(III)-[cytochrome c] + 2 H2O + 4 H(+)(out). Its function is as follows. Component of the cytochrome c oxidase, the last enzyme in the mitochondrial electron transport chain which drives oxidative phosphorylation. The respiratory chain contains 3 multisubunit complexes succinate dehydrogenase (complex II, CII), ubiquinol-cytochrome c oxidoreductase (cytochrome b-c1 complex, complex III, CIII) and cytochrome c oxidase (complex IV, CIV), that cooperate to transfer electrons derived from NADH and succinate to molecular oxygen, creating an electrochemical gradient over the inner membrane that drives transmembrane transport and the ATP synthase. Cytochrome c oxidase is the component of the respiratory chain that catalyzes the reduction of oxygen to water. Electrons originating from reduced cytochrome c in the intermembrane space (IMS) are transferred via the dinuclear copper A center (CU(A)) of subunit 2 and heme A of subunit 1 to the active site in subunit 1, a binuclear center (BNC) formed by heme A3 and copper B (CU(B)). The BNC reduces molecular oxygen to 2 water molecules using 4 electrons from cytochrome c in the IMS and 4 protons from the mitochondrial matrix. The chain is Cytochrome c oxidase subunit 2 (MT-CO2) from Rusa unicolor (Sambar).